The sequence spans 319 residues: ADP-ribosyl cyclase/cyclic ADP-ribose hydrolase 2 (319 aa).

The first 33 residues, 1–33, serve as a signal peptide directing secretion; sequence MAVQACALSLRLGLWMSLLLPVLPGAGARAAGA. Intrachain disulfides connect cysteine 52/cysteine 68, cysteine 84/cysteine 164, and cysteine 145/cysteine 158. N-linked (GlcNAc...) asparagine glycans are attached at residues asparagine 67 and asparagine 96. Tryptophan 110 contributes to the NAD(+) binding site. Tryptophan 110 contacts nicotinamide. Asparagine 149 carries an N-linked (GlcNAc...) asparagine glycan. NAD(+) is bound at residue tryptophan 173. N-linked (GlcNAc...) asparagine glycosylation occurs at asparagine 193. An NAD(+)-binding site is contributed by glutamate 211. 2 disulfide bridges follow: cysteine 239/cysteine 260 and cysteine 272/cysteine 281. A lipid anchor (GPI-anchor amidated serine) is attached at serine 294. The propeptide occupies 295–319; it reads PALHAIGDISLIISLLVALASSSQA.

Belongs to the ADP-ribosyl cyclase family. In terms of assembly, homodimer. In terms of tissue distribution, pancreatic islets, kidney, spleen, heart, thymus, intestine and salivary gland.

The protein localises to the cell membrane. The catalysed reaction is NAD(+) + H2O = ADP-D-ribose + nicotinamide + H(+). It catalyses the reaction NAD(+) = cyclic ADP-beta-D-ribose + nicotinamide + H(+). The enzyme catalyses cyclic ADP-beta-D-ribose + H2O = ADP-D-ribose. Catalyzes both the synthesis of cyclic ADP-beta-D-ribose (cADPR) from NAD(+), and its hydrolysis to ADP-D-ribose (ADPR). Cyclic ADPR is known to serve as an endogenous second messenger that elicits calcium release from intracellular stores, and thus regulates the mobilization of intracellular calcium. May be involved in pre-B-cell growth. This chain is ADP-ribosyl cyclase/cyclic ADP-ribose hydrolase 2 (Bst1), found in Rattus norvegicus (Rat).